A 948-amino-acid polypeptide reads, in one-letter code: Valine--tRNA ligase (948 aa).

The short motif at P40–H50 is the 'HIGH' region element. The 'KMSKS' region motif lies at K551–S555. K554 serves as a coordination point for ATP. Residues L879–I945 adopt a coiled-coil conformation.

This sequence belongs to the class-I aminoacyl-tRNA synthetase family. ValS type 1 subfamily. In terms of assembly, monomer.

The protein resides in the cytoplasm. The enzyme catalyses tRNA(Val) + L-valine + ATP = L-valyl-tRNA(Val) + AMP + diphosphate. Catalyzes the attachment of valine to tRNA(Val). As ValRS can inadvertently accommodate and process structurally similar amino acids such as threonine, to avoid such errors, it has a 'posttransfer' editing activity that hydrolyzes mischarged Thr-tRNA(Val) in a tRNA-dependent manner. This Pseudomonas syringae pv. syringae (strain B728a) protein is Valine--tRNA ligase.